The chain runs to 360 residues: Chorismate synthase (360 aa).

Residues 36 to 60 (LSEDDIQPDLDRRKPGTSKYTTPRR) are disordered. R48 serves as a coordination point for NADP(+). FMN-binding positions include 125–127 (RSS), 246–247 (NA), G286, 301–305 (KPTSS), and R327.

It belongs to the chorismate synthase family. Homotetramer. FMNH2 is required as a cofactor.

It catalyses the reaction 5-O-(1-carboxyvinyl)-3-phosphoshikimate = chorismate + phosphate. The protein operates within metabolic intermediate biosynthesis; chorismate biosynthesis; chorismate from D-erythrose 4-phosphate and phosphoenolpyruvate: step 7/7. Its function is as follows. Catalyzes the anti-1,4-elimination of the C-3 phosphate and the C-6 proR hydrogen from 5-enolpyruvylshikimate-3-phosphate (EPSP) to yield chorismate, which is the branch point compound that serves as the starting substrate for the three terminal pathways of aromatic amino acid biosynthesis. This reaction introduces a second double bond into the aromatic ring system. This chain is Chorismate synthase, found in Histophilus somni (strain 129Pt) (Haemophilus somnus).